Here is a 271-residue protein sequence, read N- to C-terminus: S-adenosylmethionine decarboxylase proenzyme (271 aa).

The active-site Schiff-base intermediate with substrate; via pyruvic acid is the serine 121. A Pyruvic acid (Ser); by autocatalysis modification is found at serine 121. The active-site Proton acceptor; for processing activity is the histidine 126. The Proton donor; for catalytic activity role is filled by cysteine 149.

This sequence belongs to the prokaryotic AdoMetDC family. Type 2 subfamily. Heterooctamer of four alpha and four beta chains arranged as a tetramer of alpha/beta heterodimers. Pyruvate serves as cofactor. Is synthesized initially as an inactive proenzyme. Formation of the active enzyme involves a self-maturation process in which the active site pyruvoyl group is generated from an internal serine residue via an autocatalytic post-translational modification. Two non-identical subunits are generated from the proenzyme in this reaction, and the pyruvate is formed at the N-terminus of the alpha chain, which is derived from the carboxyl end of the proenzyme. The post-translation cleavage follows an unusual pathway, termed non-hydrolytic serinolysis, in which the side chain hydroxyl group of the serine supplies its oxygen atom to form the C-terminus of the beta chain, while the remainder of the serine residue undergoes an oxidative deamination to produce ammonia and the pyruvoyl group blocking the N-terminus of the alpha chain.

It catalyses the reaction S-adenosyl-L-methionine + H(+) = S-adenosyl 3-(methylsulfanyl)propylamine + CO2. It functions in the pathway amine and polyamine biosynthesis; S-adenosylmethioninamine biosynthesis; S-adenosylmethioninamine from S-adenosyl-L-methionine: step 1/1. In terms of biological role, catalyzes the decarboxylation of S-adenosylmethionine to S-adenosylmethioninamine (dcAdoMet), the propylamine donor required for the synthesis of the polyamines spermine and spermidine from the diamine putrescine. The sequence is that of S-adenosylmethionine decarboxylase proenzyme from Clostridium perfringens (strain ATCC 13124 / DSM 756 / JCM 1290 / NCIMB 6125 / NCTC 8237 / Type A).